Here is a 231-residue protein sequence, read N- to C-terminus: Cysteine-rich venom protein VAR10 (231 aa).

An N-terminal signal peptide occupies residues 1–19 (MILLKLYLTLAAILCQSRG). The 129-residue stretch at 41–169 (NKHNDLRRTV…SLKYFQVCQY (129 aa)) folds into the SCP domain. Cystine bridges form between Cys-77/Cys-156, Cys-95/Cys-170, Cys-151/Cys-167, Cys-189/Cys-196, and Cys-214/Cys-231. The ShKT domain maps to 205 to 231 (CAYNDDYTSCPDLTKQVGCHHPVTANC).

The protein belongs to the CRISP family. Contains 8 disulfide bonds. As to expression, expressed by the venom gland.

The protein resides in the secreted. Functionally, blocks ryanodine receptors, and potassium channels. The protein is Cysteine-rich venom protein VAR10 of Varanus varius (Lace monitor lizard).